The primary structure comprises 408 residues: MMSISEATVDSMIKDLPLPSNILKTLRDDVIKAGVSKKEMEEIIERVMEEYTVSCIEPCDAAGVVAAQSIGEPGTQMTMRTFHYAGVAEINVTLGLPRLIEIVDARKIPSTPMMTIALSKEHPEDYAYDREKTRALAWEIEATKIDHIADVTTDLSQMKLIIDLHEKAMEGRNITIDRVKEKFNEELNVLVSISPDIDNQIVITPGEPSYRELLQLAKSIHNVTLKGIEGIKRVVVRKEGEEYTLYTEGSALREVLQFEGVDRTRTSTNNINEIYEVLGIEAARNAIIKEATDTLREQGLTVDIRHIMLVADLMTSDGEVKQIGRHGISGEKASVFARAAFEVTVNHLLDAGMRGYVDQLQGVTENIIVGQPIRMGTGDVHLISRKAEKVVEVPPEIETAEEIEVEEG.

The protein belongs to the RNA polymerase beta' chain family. As to quaternary structure, part of the RNA polymerase complex.

Its subcellular location is the cytoplasm. The enzyme catalyses RNA(n) + a ribonucleoside 5'-triphosphate = RNA(n+1) + diphosphate. DNA-dependent RNA polymerase (RNAP) catalyzes the transcription of DNA into RNA using the four ribonucleoside triphosphates as substrates. Forms part of the jaw domain. The sequence is that of DNA-directed RNA polymerase subunit Rpo1C from Methanosarcina mazei (strain ATCC BAA-159 / DSM 3647 / Goe1 / Go1 / JCM 11833 / OCM 88) (Methanosarcina frisia).